A 275-amino-acid chain; its full sequence is Chemotaxis protein methyltransferase 1 (275 aa).

Positions 1-275 (MTAITISDQE…CNPGIIYKLK (275 aa)) constitute a CheR-type methyltransferase domain. S-adenosyl-L-methionine contacts are provided by residues asparagine 76, threonine 78, arginine 82, glutamate 117, aspartate 145, 201-202 (NL), and 218-219 (RN).

The enzyme catalyses L-glutamyl-[protein] + S-adenosyl-L-methionine = [protein]-L-glutamate 5-O-methyl ester + S-adenosyl-L-homocysteine. Functionally, methylation of the membrane-bound methyl-accepting chemotaxis proteins (MCP) to form gamma-glutamyl methyl ester residues in MCP. The protein is Chemotaxis protein methyltransferase 1 (cheR1) of Vibrio cholerae serotype O1 (strain ATCC 39315 / El Tor Inaba N16961).